The chain runs to 270 residues: NAD(P)H-hydrate epimerase (270 aa).

Residues 25–234 (FQQLMDLMQN…DLLAPEAIYQ (210 aa)) form the YjeF N-terminal domain. 73-77 (DNGGQ) is a (6S)-NADPHX binding site. The K(+) site is built by Asn74 and Asp144. (6S)-NADPHX is bound by residues 148–154 (GVGLYGH) and Glu177. Thr180 serves as a coordination point for K(+).

Belongs to the NnrE/AIBP family. It depends on K(+) as a cofactor.

It catalyses the reaction (6R)-NADHX = (6S)-NADHX. It carries out the reaction (6R)-NADPHX = (6S)-NADPHX. Its function is as follows. Catalyzes the epimerization of the S- and R-forms of NAD(P)HX, a damaged form of NAD(P)H that is a result of enzymatic or heat-dependent hydration. This is a prerequisite for the S-specific NAD(P)H-hydrate dehydratase to allow the repair of both epimers of NAD(P)HX. In Legionella pneumophila subsp. pneumophila (strain Philadelphia 1 / ATCC 33152 / DSM 7513), this protein is NAD(P)H-hydrate epimerase.